Consider the following 359-residue polypeptide: Fructose-bisphosphate aldolase, cytoplasmic isozyme 2 (359 aa).

2 residues coordinate substrate: Arg52 and Lys143. Glu184 functions as the Proton acceptor in the catalytic mechanism. Lys226 acts as the Schiff-base intermediate with dihydroxyacetone-P in catalysis.

Belongs to the class I fructose-bisphosphate aldolase family.

It localises to the cytoplasm. The enzyme catalyses beta-D-fructose 1,6-bisphosphate = D-glyceraldehyde 3-phosphate + dihydroxyacetone phosphate. It functions in the pathway carbohydrate degradation; glycolysis; D-glyceraldehyde 3-phosphate and glycerone phosphate from D-glucose: step 4/4. This chain is Fructose-bisphosphate aldolase, cytoplasmic isozyme 2, found in Pisum sativum (Garden pea).